Consider the following 167-residue polypeptide: MAKLEAQQKDDLQEKLIAVNRVSKVVKGGRIFSFTALTVVGDGNGKIGYGYGKAREVPAAIQKAMEKARRNMVTVELNAGTLHHPVKGRHTGSKVYMQPASQGTGIIAGGAMRAVLEVAGVHNVLSKAYGSTNPINIVRATVDALVHMKSPAQIAAKRGLNVDEIRG.

An S5 DRBM domain is found at 12–75 (LQEKLIAVNR…EKARRNMVTV (64 aa)).

It belongs to the universal ribosomal protein uS5 family. In terms of assembly, part of the 30S ribosomal subunit. Contacts proteins S4 and S8.

Functionally, with S4 and S12 plays an important role in translational accuracy. Its function is as follows. Located at the back of the 30S subunit body where it stabilizes the conformation of the head with respect to the body. This is Small ribosomal subunit protein uS5 from Shewanella denitrificans (strain OS217 / ATCC BAA-1090 / DSM 15013).